The sequence spans 81 residues: Spore coat protein F-like protein YraG (81 aa).

Belongs to the CotF family.

The protein localises to the spore coat. This chain is Spore coat protein F-like protein YraG (yraG), found in Bacillus subtilis (strain 168).